The following is a 219-amino-acid chain: Small ribosomal subunit protein uS3 (219 aa).

The region spanning 39–107 is the KH type-2 domain; sequence LRKFLKKKLH…EVLIDIQEVR (69 aa).

Belongs to the universal ribosomal protein uS3 family. In terms of assembly, part of the 30S ribosomal subunit. Forms a tight complex with proteins S10 and S14.

Functionally, binds the lower part of the 30S subunit head. Binds mRNA in the 70S ribosome, positioning it for translation. This Desulfatibacillum aliphaticivorans protein is Small ribosomal subunit protein uS3.